Consider the following 461-residue polypeptide: Cysteine--tRNA ligase (461 aa).

Residue Cys-28 coordinates Zn(2+). The short motif at Ile-30–His-40 is the 'HIGH' region element. 3 residues coordinate Zn(2+): Cys-209, His-234, and Glu-238. Residues Lys-266–Ser-270 carry the 'KMSKS' region motif. Residue Lys-269 coordinates ATP.

This sequence belongs to the class-I aminoacyl-tRNA synthetase family. In terms of assembly, monomer. Zn(2+) serves as cofactor.

Its subcellular location is the cytoplasm. It carries out the reaction tRNA(Cys) + L-cysteine + ATP = L-cysteinyl-tRNA(Cys) + AMP + diphosphate. The sequence is that of Cysteine--tRNA ligase from Escherichia coli (strain SMS-3-5 / SECEC).